Consider the following 351-residue polypeptide: Nitronate monooxygenase (351 aa).

FMN contacts are provided by residues Leu-21, Asn-69, Gln-176, Gly-181, Gly-218, and 237-240 (QMGT).

It belongs to the nitronate monooxygenase family. NMO class I subfamily. The cofactor is FMN.

The enzyme catalyses 3 propionate 3-nitronate + 3 O2 + H2O = 3 3-oxopropanoate + 2 nitrate + nitrite + H2O2 + 3 H(+). Its function is as follows. Nitronate monooxygenase that uses molecular oxygen to catalyze the oxidative denitrification of alkyl nitronates. The toxin propionate 3-nitronate (P3N) is the best substrate (and the presumed physiological substrate), but this enzyme is also active on other primary and secondary nitronates such as propyl-1-nitronate, ethylnitronate, pentyl-1-nitronate, butyl-1-nitronate and propyl-2-nitronate. Is likely involved in the degradation of P3N, that allows P.aeruginosa PAO1 to grow on 3-nitropropionate/P3N as the sole nitrogen source. Also functions in the detoxification of P3N, a metabolic poison produced by plants and fungi as a defense mechanism. Cannot oxidize nitroalkanes such as 3-nitropropionate, nitroethane, 1-nitropropane, 1-nitrobutane, 1-nitropentane, or 2-nitropropane. This Pseudomonas aeruginosa (strain ATCC 15692 / DSM 22644 / CIP 104116 / JCM 14847 / LMG 12228 / 1C / PRS 101 / PAO1) protein is Nitronate monooxygenase.